The sequence spans 432 residues: Methylenetetrahydrofolate--tRNA-(uracil-5-)-methyltransferase TrmFO (432 aa).

7 to 12 is an FAD binding site; that stretch reads GAGLAG.

The protein belongs to the MnmG family. TrmFO subfamily. The cofactor is FAD.

It localises to the cytoplasm. It carries out the reaction uridine(54) in tRNA + (6R)-5,10-methylene-5,6,7,8-tetrahydrofolate + NADH + H(+) = 5-methyluridine(54) in tRNA + (6S)-5,6,7,8-tetrahydrofolate + NAD(+). The catalysed reaction is uridine(54) in tRNA + (6R)-5,10-methylene-5,6,7,8-tetrahydrofolate + NADPH + H(+) = 5-methyluridine(54) in tRNA + (6S)-5,6,7,8-tetrahydrofolate + NADP(+). Catalyzes the folate-dependent formation of 5-methyl-uridine at position 54 (M-5-U54) in all tRNAs. In Anoxybacillus flavithermus (strain DSM 21510 / WK1), this protein is Methylenetetrahydrofolate--tRNA-(uracil-5-)-methyltransferase TrmFO.